The primary structure comprises 325 residues: Chain length determinant protein (325 aa).

Topologically, residues 1–31 (MRVENNNVSGQNHDPEQIDLIDLLVQLWRGK) are cytoplasmic. Residues 32–52 (MTIIISVIVAIALAIGYLAVA) traverse the membrane as a helical segment. Over 53-294 (KEKWTSTAIV…LPIRRDSPKK (242 aa)) the chain is Periplasmic. A helical transmembrane segment spans residues 295–315 (AITLILAVLLGGMVGAGIVLG). Residues 316–325 (RNALRNYNAK) are Cytoplasmic-facing.

Belongs to the WzzB/Cld/Rol family.

The protein resides in the cell inner membrane. It participates in bacterial outer membrane biogenesis; lipopolysaccharide biosynthesis. Its function is as follows. Confers a modal distribution of chain length on the O-antigen component of lipopolysaccharide (LPS). Gives rise to a reduced number of short chain molecules and increases in numbers of longer molecules. In Shigella dysenteriae, this protein is Chain length determinant protein (wzzB).